The chain runs to 173 residues: Ribosome maturation factor RimM (173 aa).

The 73-residue stretch at Glu-98 to Leu-170 folds into the PRC barrel domain.

It belongs to the RimM family. As to quaternary structure, binds ribosomal protein uS19.

The protein resides in the cytoplasm. An accessory protein needed during the final step in the assembly of 30S ribosomal subunit, possibly for assembly of the head region. Essential for efficient processing of 16S rRNA. May be needed both before and after RbfA during the maturation of 16S rRNA. It has affinity for free ribosomal 30S subunits but not for 70S ribosomes. The polypeptide is Ribosome maturation factor RimM (Pelobacter propionicus (strain DSM 2379 / NBRC 103807 / OttBd1)).